The chain runs to 208 residues: Kinetochore protein Spc25 (208 aa).

A coiled-coil region spans residues 31–101 (SKIAAKHQLI…KKQRRDELMG (71 aa)).

This sequence belongs to the SPC25 family. In terms of assembly, component of the Ndc80 complex, which is composed of Ndc80, Nuf2 and Spc25.

The protein resides in the nucleus. It localises to the chromosome. Its subcellular location is the centromere. It is found in the kinetochore. Functionally, acts as a component of the essential kinetochore-associated Ndc80 complex, which is required for chromosome segregation and spindle checkpoint activity during meiosis and mitosis. Required for kinetochore integrity and the organization of stable microtubule binding sites in the outer plate of the kinetochore. Participates in SAC signaling that responds specifically to disruptions in spindle microtubule dynamics. The NDC80 complex synergistically enhances the affinity of the SKA1 complex for microtubules and may allow the NDC80 complex to track depolymerizing microtubules. This is Kinetochore protein Spc25 from Drosophila mojavensis (Fruit fly).